The sequence spans 344 residues: Pre-mRNA polyadenylation factor fip1 (344 aa).

Disordered stretches follow at residues 1-99 and 230-344; these read MSNA…LSTA and NYNT…RNRY. The segment covering 28–38 has biased composition (polar residues); that stretch reads VTVSNAKSPEQ. A compositionally biased stretch (acidic residues) spans 39-50; it reads ASEESDDSDIEF. Basic and acidic residues predominate over residues 80–92; sequence QVEKTAVEVKTTE. The segment covering 243–258 has biased composition (low complexity); sequence SGAATPNAYVNNNPSS. Over residues 271–301 the composition is skewed to polar residues; it reads NITSSAGMTHAQPTHNPTSSYGNGASTNYNA. Over residues 302–317 the composition is skewed to low complexity; it reads SRPPSNHPHSSNYPSS.

Belongs to the FIP1 family.

It localises to the nucleus. Its function is as follows. Pre-mRNA polyadenylation factor that directly interacts with poly(A) polymerase. The protein is Pre-mRNA polyadenylation factor fip1 of Schizosaccharomyces pombe (strain 972 / ATCC 24843) (Fission yeast).